The sequence spans 63 residues: Prokaryotic ubiquitin-like protein UBact (63 aa).

Positions 1-63 (MSGRSTFGRF…SRRYRQRTGE (63 aa)) are disordered. A compositionally biased stretch (basic and acidic residues) spans 17 to 50 (PWERKPGDDEGGPKRPKVERPDTNDLLKRMRRVD). An Isoglutamyl lysine isopeptide (Glu-Lys) (interchain with K-? in acceptor proteins) cross-link involves residue Glu63.

The protein belongs to the ubiquitin-like protein UBact family.

Functionally, may function as a protein modifier covalently attached to lysine residues of substrate proteins. This may serve to target the modified proteins for degradation by proteasomes. This Handelsmanbacteria sp. (strain RIFCSPLOWO2_12_FULL_64_10) protein is Prokaryotic ubiquitin-like protein UBact.